The following is a 444-amino-acid chain: MSQRTEHNGSWLRNAGSLLSVLACVAVLASPASATPASAAAAAAPRTDDYLKRAERILKFTPLIDGHNDLPNFIRKTTKNQIYEGKIPFEDELPGHTDLKRLRKGRVGGQFWSVYTPCPDPPVPIDNPTWSVRDTLEQIDVTKRLIEKYSRDLQFCGDARCARRAFRRGKIASFLGIEGGHQIGNSLGDLRRVYELGVRYITVTHNCDNAFATAQSTVADGLPDTGLMKPFGIEFVKEMNRLGMLVDLSHVSANTMRDTLKVARAPVIFSHSSAYAVSNHLRNVPDDVLKEVAKNNGVVMVTFVSRFVNVENPDAADINTVVDHIFHIAKVAGWDHVGIGGDYDGTVYLPKGLEDVSKYPHLIARVLERGATTQQVRKLVGENILRVWTEVERIAKRLQKTELPNEAYWEGRNWTRPAKRDLNADFEGRSVPLFTSASNGDFCD.

Positions 1 to 34 (MSQRTEHNGSWLRNAGSLLSVLACVAVLASPASA) are cleaved as a signal peptide. Zn(2+) is bound by residues histidine 67, aspartate 69, and glutamate 178. Cysteine 118 and cysteine 207 are oxidised to a cystine. Histidine 205 provides a ligand contact to substrate. Residues histidine 250 and histidine 271 each coordinate Zn(2+). Residues arginine 282 and aspartate 342 each coordinate substrate. An N-linked (GlcNAc...) asparagine glycan is attached at asparagine 413.

Belongs to the metallo-dependent hydrolases superfamily. Peptidase M19 family. Zn(2+) serves as cofactor.

The catalysed reaction is an L-aminoacyl-L-amino acid + H2O = 2 an L-alpha-amino acid. Hydrolyzes a wide range of dipeptides. This Coccidioides posadasii (strain C735) (Valley fever fungus) protein is Putative dipeptidase CPC735_015490.